A 74-amino-acid polypeptide reads, in one-letter code: Defensin (74 aa).

Positions Met-1 to Ala-22 are cleaved as a signal peptide. Residues Ala-23 to Arg-36 constitute a propeptide that is removed on maturation. Intrachain disulfides connect Cys-40–Cys-61, Cys-47–Cys-69, and Cys-51–Cys-71.

As to expression, hemolymph.

It is found in the secreted. Antibacterial activity against Gram-positive and Gram-negative bacteria. The protein is Defensin (VSNA1) of Dermacentor variabilis (American dog tick).